Reading from the N-terminus, the 353-residue chain is Vomeronasal type-1 receptor 1 (353 aa).

Residues 1–56 (MVGDTLKLLSPLMTRYFFLLFYSTDSSDLNENQHPLDFDEMAFGKVKSGISFLIQT) lie on the Extracellular side of the membrane. The helical transmembrane segment at 57 to 77 (GVGILGNSFLLCFYNLILFTG) threads the bilayer. Residues 78–84 (HKLRPTD) lie on the Cytoplasmic side of the membrane. The helical transmembrane segment at 85 to 105 (LILSHLALANSMVLFFKGIPQ) threads the bilayer. The Extracellular portion of the chain corresponds to 106 to 132 (TMAAFGLKYLLNDTGCKFVFYYHRVGT). Asparagine 117 is a glycosylation site (N-linked (GlcNAc...) asparagine). Residues 133–153 (RVSLSTICLLNGFQAIKLNPS) traverse the membrane as a helical segment. Residues 154-169 (ICRWMEIKIRSPRFID) lie on the Cytoplasmic side of the membrane. A helical transmembrane segment spans residues 170–190 (FCCLLCWVPHVLMNASVLLLV). The Extracellular portion of the chain corresponds to 191 to 226 (NGPLNSKNSSAKNNYGYCSYKASKRFSSLHAVLYFS). The N-linked (GlcNAc...) asparagine glycan is linked to asparagine 198. Residues 227–247 (PDFMSLGFMVWASGSMVFFLY) traverse the membrane as a helical segment. Residues 248-274 (RHKQQVQHNHSNRLSCRPSQETRATRT) are Cytoplasmic-facing. A helical membrane pass occupies residues 275–295 (IMVLVSSFFVFYSVHSFLTIW). At 296–303 (TTVVANPG) the chain is on the extracellular side. The chain crosses the membrane as a helical span at residues 304–324 (QWIVNNSVLVASYFPSRSPFV). At 325 to 353 (LIMSDTRISQFCFACRTRKTLFPNLVVMP) the chain is on the cytoplasmic side.

This sequence belongs to the G-protein coupled receptor 1 family.

The protein localises to the cell membrane. Putative pheromone receptor. This is Vomeronasal type-1 receptor 1 (VN1R1) from Gorilla gorilla gorilla (Western lowland gorilla).